Reading from the N-terminus, the 235-residue chain is Orotidine 5'-phosphate decarboxylase (235 aa).

Substrate contacts are provided by residues Asp-12, Lys-34, 61 to 70, Thr-121, Arg-182, Gln-191, Gly-211, and Arg-212; that span reads DLKFHDIPNT. The active-site Proton donor is the Lys-63.

This sequence belongs to the OMP decarboxylase family. Type 1 subfamily. As to quaternary structure, homodimer.

It catalyses the reaction orotidine 5'-phosphate + H(+) = UMP + CO2. It participates in pyrimidine metabolism; UMP biosynthesis via de novo pathway; UMP from orotate: step 2/2. In terms of biological role, catalyzes the decarboxylation of orotidine 5'-monophosphate (OMP) to uridine 5'-monophosphate (UMP). This Marinomonas sp. (strain MWYL1) protein is Orotidine 5'-phosphate decarboxylase.